The chain runs to 400 residues: MNKTVGSTLLVAGTMIGAGMLAMPLTSAGIGFGFTLVLLLGLWALLTFSALLFVELYQTAESDAGIGTLAEQYFGKTGRIIATAVLIIFLYALIAAYISGGGSLLKDLLPESFGDKVSVLLFTVIFGSFIVIGTHSVDKINRVLFFVMLAAFAVVLSLMLPEIKFDNLMATPIDKALIISASPVFFTAFGFHGSIPSLNKYLDGNVKALRFSILVGSAITLCAYILWQLSTHGLLTQNEFLQILKEDATLNGLVKATFAITGSNVIASAVKLFSTLALITSFLGVGLGLLECIEDLLKRSFNVTAGRISLGLLTFIPPLVFALFYPEGFILALGYAGQMFAFYAVVLPVSLVWKARRAHANLPYKVWGGNLTLIIVLVLGVLITSIPFAIRAGYLPFVVG.

The next 12 membrane-spanning stretches (helical) occupy residues Val-5–Leu-25, Phe-34–Val-54, Ile-80–Gly-100, Val-117–Val-137, Val-143–Ile-163, Ala-176–Pro-196, Phe-211–Thr-231, Leu-250–Val-270, Phe-273–Ile-293, Leu-313–Leu-333, Tyr-335–Ala-355, and Asn-370–Ile-390.

This sequence belongs to the amino acid/polyamine transporter 2 family. Mtr/TnaB/TyrP permease subfamily.

The protein resides in the cell inner membrane. It carries out the reaction L-tyrosine(in) + H(+)(in) = L-tyrosine(out) + H(+)(out). Transports tyrosine across the cytoplasmic membrane. The transport system is energized by the proton motive force. The chain is Tyrosine-specific transport system 1 (tyrP-A) from Haemophilus influenzae (strain ATCC 51907 / DSM 11121 / KW20 / Rd).